Here is a 507-residue protein sequence, read N- to C-terminus: MKTTLVSTPLAQLETELLAVFATDTAPAADMANGTQASPQVQLLTRDAALDAAVKTILASGDFKAEANETLLIHAPQGMAARRLLLVGAGKQARFTVHALRKAAGSAVRAARAKNIREATLAIPQSQGLDVTATARALGHGAAVADFDPDFYRSDRKDKSLQSLTLALPEATDANAAEAGLREGIALGESQNLTRTLVNEPGNRLTPTLLGEQAKKMCAEQGLRCQVYSSEKLHELKMGSFWSVTQGSDEPPALIVMEYTPEGAAEGPVLGLVGKGITFDSGGLSLKPADSMEKMKYDMAGAAAMIGAMRAIALLKPRIKVISVICSAENMPSGKAQKPGDVQISMIGKSIEVLNTDAEGRLVLADGLAYAKQLGATHLIDAATLTGAVMVALGGVNAGVFCNDEEAWQHFEAALGQSGEKFWRLPLDEEYREMLRSPIADIKNVGGRYGGASTAAMFLKEFVGDTPWVHLDIAGTAWMDEAKPWMSSGPSGIAMPSIVEWVRSFAR.

Residues lysine 275 and aspartate 280 each coordinate Mn(2+). Lysine 287 is a catalytic residue. Residues aspartate 298, aspartate 357, and glutamate 359 each contribute to the Mn(2+) site. Arginine 361 is an active-site residue.

This sequence belongs to the peptidase M17 family. Mn(2+) serves as cofactor.

It is found in the cytoplasm. It carries out the reaction Release of an N-terminal amino acid, Xaa-|-Yaa-, in which Xaa is preferably Leu, but may be other amino acids including Pro although not Arg or Lys, and Yaa may be Pro. Amino acid amides and methyl esters are also readily hydrolyzed, but rates on arylamides are exceedingly low.. The catalysed reaction is Release of an N-terminal amino acid, preferentially leucine, but not glutamic or aspartic acids.. Functionally, presumably involved in the processing and regular turnover of intracellular proteins. Catalyzes the removal of unsubstituted N-terminal amino acids from various peptides. The sequence is that of Probable cytosol aminopeptidase from Acidobacterium capsulatum (strain ATCC 51196 / DSM 11244 / BCRC 80197 / JCM 7670 / NBRC 15755 / NCIMB 13165 / 161).